An 88-amino-acid chain; its full sequence is Apolipoprotein C-I (88 aa).

An N-terminal signal peptide occupies residues 1 to 26 (MRLFISLPVLIVVLAMALEGPAPAQA).

It belongs to the apolipoprotein C1 family.

It localises to the secreted. In terms of biological role, inhibitor of lipoprotein binding to the low density lipoprotein (LDL) receptor, LDL receptor-related protein, and very low density lipoprotein (VLDL) receptor. Associates with high density lipoproteins (HDL) and the triacylglycerol-rich lipoproteins in the plasma and makes up about 10% of the protein of the VLDL and 2% of that of HDL. Appears to interfere directly with fatty acid uptake and is also the major plasma inhibitor of cholesteryl ester transfer protein (CETP). Modulates the interaction of APOE with beta-migrating VLDL and inhibits binding of beta-VLDL to the LDL receptor-related protein. Binds free fatty acids and reduces their intracellular esterification. This chain is Apolipoprotein C-I (APOC1), found in Myodes glareolus (Bank vole).